The primary structure comprises 311 residues: Aspartate carbamoyltransferase catalytic subunit (311 aa).

2 residues coordinate carbamoyl phosphate: Arg-57 and Thr-58. Lys-86 serves as a coordination point for L-aspartate. 3 residues coordinate carbamoyl phosphate: Arg-107, His-135, and Gln-138. The L-aspartate site is built by Arg-168 and Arg-230. Carbamoyl phosphate-binding residues include Leu-269 and Pro-270.

The protein belongs to the aspartate/ornithine carbamoyltransferase superfamily. ATCase family. In terms of assembly, heterooligomer of catalytic and regulatory chains.

It catalyses the reaction carbamoyl phosphate + L-aspartate = N-carbamoyl-L-aspartate + phosphate + H(+). It participates in pyrimidine metabolism; UMP biosynthesis via de novo pathway; (S)-dihydroorotate from bicarbonate: step 2/3. In terms of biological role, catalyzes the condensation of carbamoyl phosphate and aspartate to form carbamoyl aspartate and inorganic phosphate, the committed step in the de novo pyrimidine nucleotide biosynthesis pathway. In Staphylothermus marinus (strain ATCC 43588 / DSM 3639 / JCM 9404 / F1), this protein is Aspartate carbamoyltransferase catalytic subunit.